A 157-amino-acid polypeptide reads, in one-letter code: uncharacterized protein (157 aa).

The 146-residue stretch at L9–E154 folds into the N-acetyltransferase domain.

This is an uncharacterized protein from Bacillus cereus (strain B4264).